We begin with the raw amino-acid sequence, 427 residues long: Tryptophan synthase beta chain 1 (427 aa).

Lysine 107 carries the N6-(pyridoxal phosphate)lysine modification.

This sequence belongs to the TrpB family. Tetramer of two alpha and two beta chains. Pyridoxal 5'-phosphate serves as cofactor.

It catalyses the reaction (1S,2R)-1-C-(indol-3-yl)glycerol 3-phosphate + L-serine = D-glyceraldehyde 3-phosphate + L-tryptophan + H2O. The protein operates within amino-acid biosynthesis; L-tryptophan biosynthesis; L-tryptophan from chorismate: step 5/5. Functionally, the beta subunit is responsible for the synthesis of L-tryptophan from indole and L-serine. The protein is Tryptophan synthase beta chain 1 (trpB1) of Aeropyrum pernix (strain ATCC 700893 / DSM 11879 / JCM 9820 / NBRC 100138 / K1).